The sequence spans 152 residues: Small ribosomal subunit protein uS19x (152 aa).

The protein belongs to the universal ribosomal protein uS19 family.

The protein resides in the cytoplasm. In Arabidopsis thaliana (Mouse-ear cress), this protein is Small ribosomal subunit protein uS19x (RPS15D).